A 249-amino-acid polypeptide reads, in one-letter code: MVDRLANSEANTRRISIVESCFGAAGQPLTIPGRVLIGEGVLTKLCRKKPKARQFFLFNDILVYGNIVIQKKKYNKQHIIPLENVTIDSIKDEGELRNGWLIKTPTKSFAVYAATATEKSEWMNHINKCVTDLLSKSGKTPSNEHAAVWVPDSEATVCMRCQKAKFTPVNRRHHCRKCGFVVCGPCSEKRFLLPSQSSKPVRICDFCYDLLSTGDMAACQPTRSDSYSQSLKSPLNDASDDDDDDDSSD.

S16 carries the post-translational modification Phosphoserine. The region spanning 35-131 is the PH domain; sequence VLIGEGVLTK…WMNHINKCVT (97 aa). An N6-acetyllysine modification is found at K44. Residues 152–212 form an FYVE-type zinc finger; sequence DSEATVCMRC…ICDFCYDLLS (61 aa). 8 residues coordinate Zn(2+): C158, C161, C175, C178, C183, C186, C204, and C207. Residues 221–233 are compositionally biased toward polar residues; the sequence is PTRSDSYSQSLKS. A disordered region spans residues 221 to 249; that stretch reads PTRSDSYSQSLKSPLNDASDDDDDDDSSD. The segment covering 238-249 has biased composition (acidic residues); sequence ASDDDDDDDSSD. 2 positions are modified to phosphoserine: S239 and S248.

In terms of assembly, may interact with EEA1. Expressed in brain, stomach and thymus, as well as in kidney, spleen, and skeletal muscle. Also expressed in peripheral blood mononuclear cells and dendritic cells.

The protein localises to the early endosome membrane. Its subcellular location is the endoplasmic reticulum. May play a role in early endosome fusion upstream of RAB5, hence regulating receptor trafficking and fluid-phase transport. Enhances cellular sensitivity to TNF-induced apoptosis. This Mus musculus (Mouse) protein is Pleckstrin homology domain-containing family F member 2 (Plekhf2).